Consider the following 86-residue polypeptide: Large ribosomal subunit protein eL43 (86 aa).

Positions 38, 41, 56, and 59 each coordinate Zn(2+). A C4-type zinc finger spans residues 38 to 59; sequence CPVCGRKAVRRISTGIWQCQKC.

This sequence belongs to the eukaryotic ribosomal protein eL43 family. In terms of assembly, part of the 50S ribosomal subunit. It depends on Zn(2+) as a cofactor.

The chain is Large ribosomal subunit protein eL43 from Thermococcus kodakarensis (strain ATCC BAA-918 / JCM 12380 / KOD1) (Pyrococcus kodakaraensis (strain KOD1)).